The chain runs to 390 residues: Transaldolase (390 aa).

K135 functions as the Schiff-base intermediate with substrate in the catalytic mechanism. EF-hand domains are found at residues 329 to 364 and 365 to 388; these read AFCH…FDAL and DHDH…LALT. Residues D342, D344, D346, C348, E353, D365, D367, D369, R371, and D376 each coordinate Ca(2+).

It belongs to the transaldolase family. Type 1 subfamily.

It localises to the cytoplasm. The catalysed reaction is D-sedoheptulose 7-phosphate + D-glyceraldehyde 3-phosphate = D-erythrose 4-phosphate + beta-D-fructose 6-phosphate. It participates in carbohydrate degradation; pentose phosphate pathway; D-glyceraldehyde 3-phosphate and beta-D-fructose 6-phosphate from D-ribose 5-phosphate and D-xylulose 5-phosphate (non-oxidative stage): step 2/3. Transaldolase is important for the balance of metabolites in the pentose-phosphate pathway. The polypeptide is Transaldolase (Prochlorococcus marinus (strain MIT 9313)).